We begin with the raw amino-acid sequence, 401 residues long: Adenosine 3'-phospho 5'-phosphosulfate transporter 2 (401 aa).

N-linked (GlcNAc...) asparagine glycosylation is found at asparagine 12 and asparagine 71. The next 6 membrane-spanning stretches (helical) occupy residues 78-98 (LTQFFICVAGVFVFYLIYGYL), 114-134 (YLTLVQFAFYSIFGLIELQLI), 147-167 (MIIAFLTVGTMGLSNTSLGYL), 170-190 (PTQVIFKCCKLIPVMLGGVFI), 196-216 (NVADVSAAICMSLGLIWFTLA), and 223-243 (NFNLTGVVLISLALCADAVIG). Asparagine 254 carries an N-linked (GlcNAc...) asparagine glycan. 4 helical membrane-spanning segments follow: residues 267 to 287 (IGFVYILLGLTCTSGLGPAVT), 298 to 317 (GYAFLFSLTGYFGISFVLAL), 324 to 346 (LIAVTVTTGRKAMTIVLSFIFFA), and 349 to 369 (FTFQYVWSGLLVVLGIFLNVY).

The protein belongs to the nucleotide-sugar transporter family. SLC35B subfamily. As to expression, preferentially and highly expressed in colon.

It localises to the golgi apparatus membrane. It catalyses the reaction 3'-phosphoadenylyl sulfate(in) + adenosine 3',5'-bisphosphate(out) = 3'-phosphoadenylyl sulfate(out) + adenosine 3',5'-bisphosphate(in). Functionally, probably functions as a 3'-phosphoadenylyl sulfate:adenosine 3',5'-bisphosphate antiporter at the Golgi membranes. Mediates the transport from the cytosol into the lumen of the Golgi of 3'-phosphoadenylyl sulfate/adenosine 3'-phospho 5'-phosphosulfate (PAPS), a universal sulfuryl donor for sulfation events that take place in that compartment. In Homo sapiens (Human), this protein is Adenosine 3'-phospho 5'-phosphosulfate transporter 2.